Consider the following 88-residue polypeptide: Serine protease inhibitor Kazal-type 11 (88 aa).

The signal sequence occupies residues M1–S24. The Kazal-like domain maps to L32–K87. The N-linked (GlcNAc...) asparagine glycan is linked to N37. 3 disulfide bridges follow: C38/C69, C47/C66, and C55/C85.

Expressed in epydiymis, in the caput. Also expressed in seminal vesicles.

The protein resides in the secreted. In terms of biological role, probable serine protease inhibitor. This chain is Serine protease inhibitor Kazal-type 11 (Spink11), found in Mus musculus (Mouse).